A 798-amino-acid chain; its full sequence is Phenylalanine--tRNA ligase beta subunit (798 aa).

The region spanning 39 to 147 (AARLAGFTLA…PSGEVGERFI (109 aa)) is the tRNA-binding domain. The B5 domain maps to 404–475 (DHSRAYKLDA…RIASLTKLVG (72 aa)). Mg(2+)-binding residues include D453, D459, E462, and E463. The FDX-ACB domain occupies 704–797 (RDLQAVERDF…VAKATGGTLR (94 aa)).

It belongs to the phenylalanyl-tRNA synthetase beta subunit family. Type 1 subfamily. In terms of assembly, tetramer of two alpha and two beta subunits. Mg(2+) serves as cofactor.

The protein resides in the cytoplasm. It catalyses the reaction tRNA(Phe) + L-phenylalanine + ATP = L-phenylalanyl-tRNA(Phe) + AMP + diphosphate + H(+). The protein is Phenylalanine--tRNA ligase beta subunit of Ruegeria pomeroyi (strain ATCC 700808 / DSM 15171 / DSS-3) (Silicibacter pomeroyi).